The primary structure comprises 317 residues: tRNA dimethylallyltransferase (317 aa).

ATP is bound at residue 18–25 (GPTATGKT). 20-25 (TATGKT) contacts substrate. Interaction with substrate tRNA stretches follow at residues 43–46 (DSAL), 167–171 (QRIQR), and 281–288 (KRQITWLR).

The protein belongs to the IPP transferase family. Monomer. Mg(2+) serves as cofactor.

The catalysed reaction is adenosine(37) in tRNA + dimethylallyl diphosphate = N(6)-dimethylallyladenosine(37) in tRNA + diphosphate. Its function is as follows. Catalyzes the transfer of a dimethylallyl group onto the adenine at position 37 in tRNAs that read codons beginning with uridine, leading to the formation of N6-(dimethylallyl)adenosine (i(6)A). This chain is tRNA dimethylallyltransferase, found in Alkalilimnicola ehrlichii (strain ATCC BAA-1101 / DSM 17681 / MLHE-1).